Consider the following 504-residue polypeptide: Alpha-L-arabinofuranosidase C (504 aa).

N-linked (GlcNAc...) asparagine glycans are attached at residues Asn81, Asn152, Asn269, and Asn329.

The protein belongs to the glycosyl hydrolase 51 family.

The protein localises to the secreted. It catalyses the reaction Hydrolysis of terminal non-reducing alpha-L-arabinofuranoside residues in alpha-L-arabinosides.. Its pathway is glycan metabolism; L-arabinan degradation. In terms of biological role, alpha-L-arabinofuranosidase involved in the degradation of arabinoxylan, a major component of plant hemicellulose. Acts only on small linear 1,5-alpha-linked L-arabinofuranosyl oligosaccharides. In Emericella nidulans (strain FGSC A4 / ATCC 38163 / CBS 112.46 / NRRL 194 / M139) (Aspergillus nidulans), this protein is Alpha-L-arabinofuranosidase C (abfC).